We begin with the raw amino-acid sequence, 42 residues long: Photosystem I reaction center subunit IX (42 aa).

Residues 7 to 27 (YLSTAPVLAAVWFTVLAGILI) form a helical membrane-spanning segment.

This sequence belongs to the PsaJ family.

Its subcellular location is the plastid. It is found in the chloroplast thylakoid membrane. Functionally, may help in the organization of the PsaE and PsaF subunits. This is Photosystem I reaction center subunit IX from Ostreococcus tauri.